A 154-amino-acid chain; its full sequence is Mating pheromone 2 (154 aa).

A signal peptide spans 1 to 16; sequence MKAIFIILAILMVTQA. Positions 17–52 are excised as a propeptide; that stretch reads FKMTSKVNTKLQSQIQSKFQSKNKLASTFQTSSQLK.

The protein localises to the secreted. Mating ciliate pheromones (or gamones) are diffusible extracellular communication signals that distinguish different intraspecific classes of cells commonly referred to as 'mating types'. They prepare the latter for conjugation by changing their cell surface properties. This is Mating pheromone 2 from Euplotoides octocarinatus (Freshwater ciliate).